The chain runs to 523 residues: UDP-glucuronosyltransferase 3A1 (523 aa).

Residues 1-22 form the signal peptide; it reads MAGQQALLLFGFILPGLLFSEA. The Extracellular portion of the chain corresponds to 23–483; the sequence is AKILTVSLVG…HAFQQPWYEQ (461 aa). Residue asparagine 52 is glycosylated (N-linked (GlcNAc...) asparagine). A helical transmembrane segment spans residues 484–504; sequence YLLDVFLFLLVVTLGTMWLCG. The Cytoplasmic segment spans residues 505–523; the sequence is KLLGLVARWLCGARKLKKA.

This sequence belongs to the UDP-glycosyltransferase family.

Its subcellular location is the membrane. It catalyses the reaction glucuronate acceptor + UDP-alpha-D-glucuronate = acceptor beta-D-glucuronoside + UDP + H(+). Functionally, UDP-glucuronosyltransferases catalyze phase II biotransformation reactions in which lipophilic substrates are conjugated with glucuronic acid to increase water solubility and enhance excretion. They are of major importance in the conjugation and subsequent elimination of potentially toxic xenobiotics and endogenous compounds. The sequence is that of UDP-glucuronosyltransferase 3A1 (UGT3A1) from Bos taurus (Bovine).